The chain runs to 590 residues: Acetylcholinesterase (590 aa).

The signal sequence occupies residues 1 to 24 (MREMNLLVTSSLGVLLHLVVLCQA). Residue Asn83 is glycosylated (N-linked (GlcNAc...) asparagine). An intrachain disulfide couples Cys91 to Cys118. Residue Ser224 is the Acyl-ester intermediate of the active site. The cysteines at positions 278 and 289 are disulfide-linked. Glu351 acts as the Charge relay system in catalysis. Cysteines 426 and 545 form a disulfide. Asn440 carries N-linked (GlcNAc...) asparagine glycosylation. The active-site Charge relay system is the His464. Asn481 and Asn557 each carry an N-linked (GlcNAc...) asparagine glycan. Ser567 carries GPI-anchor amidated serine lipidation. A propeptide spans 568-590 (SGTSSSKGIIFYVLFSILYLIFY) (removed in mature form).

The protein belongs to the type-B carboxylesterase/lipase family. Isoform H form is a homodimer; the asymmetric form is a disulfide-bonded oligomer composed of a collagenic subunit (Q) and a variable number of T catalytic subunits. In terms of processing, an interchain disulfide bond is present in what becomes position 596 of the T isoform. As to expression, found in the synapses and to a lower extent in extrajunctional areas of muscle and nerve, and on erythrocyte membranes.

Its subcellular location is the cell membrane. It localises to the synapse. The catalysed reaction is acetylcholine + H2O = choline + acetate + H(+). Terminates signal transduction at the neuromuscular junction by rapid hydrolysis of the acetylcholine released into the synaptic cleft. May be involved in cell-cell interactions. This Torpedo marmorata (Marbled electric ray) protein is Acetylcholinesterase (ache).